Reading from the N-terminus, the 273-residue chain is MQESTANKVAANATSSFTEHLQRDRPELLPFNRSGQGSATAAAPLQVPHATTIVAMSYNGGVLMAGDRRATMGNVIASRHIEKVFPADRYSVLGIAGTAGIAIDLTRLFQVELEHYEKIEGTLLSLEGKANRLGAMIRGNLPLAMQGLAVVPLFAGFDTSAGVGRLFSYDVTGGRYEEHEHHTVGSGSVFARGALKKLWRPNLSAEEAVAVAIEALFDAADDDSATGGPDTVRKLWPVVYTVDSTGTRRVAEPQLAAASQHVIEARTIAGREA.

The span at 1 to 19 (MQESTANKVAANATSSFTE) shows a compositional bias: polar residues. A disordered region spans residues 1 to 23 (MQESTANKVAANATSSFTEHLQR). Residues 1–50 (MQESTANKVAANATSSFTEHLQRDRPELLPFNRSGQGSATAAAPLQVPHA) constitute a propeptide, removed in mature form; by autocatalysis. Thr51 serves as the catalytic Nucleophile.

It belongs to the peptidase T1B family. The 20S proteasome core is composed of 14 alpha and 14 beta subunits that assemble into four stacked heptameric rings, resulting in a barrel-shaped structure. The two inner rings, each composed of seven catalytic beta subunits, are sandwiched by two outer rings, each composed of seven alpha subunits. The catalytic chamber with the active sites is on the inside of the barrel. Has a gated structure, the ends of the cylinder being occluded by the N-termini of the alpha-subunits. Is capped by the proteasome-associated ATPase, ARC.

Its subcellular location is the cytoplasm. The catalysed reaction is Cleavage of peptide bonds with very broad specificity.. Its pathway is protein degradation; proteasomal Pup-dependent pathway. With respect to regulation, the formation of the proteasomal ATPase ARC-20S proteasome complex, likely via the docking of the C-termini of ARC into the intersubunit pockets in the alpha-rings, may trigger opening of the gate for substrate entry. Interconversion between the open-gate and close-gate conformations leads to a dynamic regulation of the 20S proteasome proteolysis activity. In terms of biological role, component of the proteasome core, a large protease complex with broad specificity involved in protein degradation. This chain is Proteasome subunit beta, found in Pseudarthrobacter chlorophenolicus (strain ATCC 700700 / DSM 12829 / CIP 107037 / JCM 12360 / KCTC 9906 / NCIMB 13794 / A6) (Arthrobacter chlorophenolicus).